The primary structure comprises 607 residues: Elongation factor 4 (607 aa).

The 183-residue stretch at 6–188 folds into the tr-type G domain; the sequence is SRIRNFSIIA…AIVARIPPPR (183 aa). Residues 18 to 23 and 135 to 138 each bind GTP; these read DHGKST and NKID.

This sequence belongs to the TRAFAC class translation factor GTPase superfamily. Classic translation factor GTPase family. LepA subfamily.

Its subcellular location is the cell inner membrane. It catalyses the reaction GTP + H2O = GDP + phosphate + H(+). Functionally, required for accurate and efficient protein synthesis under certain stress conditions. May act as a fidelity factor of the translation reaction, by catalyzing a one-codon backward translocation of tRNAs on improperly translocated ribosomes. Back-translocation proceeds from a post-translocation (POST) complex to a pre-translocation (PRE) complex, thus giving elongation factor G a second chance to translocate the tRNAs correctly. Binds to ribosomes in a GTP-dependent manner. This Sphingopyxis alaskensis (strain DSM 13593 / LMG 18877 / RB2256) (Sphingomonas alaskensis) protein is Elongation factor 4.